A 142-amino-acid polypeptide reads, in one-letter code: Bacilliredoxin ABC2448 (142 aa).

Belongs to the bacilliredoxin family.

The sequence is that of Bacilliredoxin ABC2448 from Shouchella clausii (strain KSM-K16) (Alkalihalobacillus clausii).